The chain runs to 219 residues: Factor in the germline alpha (219 aa).

The bHLH domain maps to 65–117; sequence ERRRVANAKERERIKNLNRGFARLKALVPFLPQSRKPSKVDILKGATEYIQVL. The tract at residues 124 to 151 is disordered; that stretch reads AKDSKKQDPDEQSYSNNSSESHTSSARQ. Positions 136 to 148 are enriched in low complexity; sequence SYSNNSSESHTSS.

As to quaternary structure, heterodimer with TCF3/isoform E12. In terms of tissue distribution, germ cells. Expressed in the fetal ovary, but not by a range of other tissues. Expression increases across mid-gestation, rising some 40-fold by the time of primordial follicle formation.

It is found in the nucleus. Its function is as follows. Germline specific transcription factor implicated in postnatal oocyte-specific gene expression. Plays a key regulatory role in the expression of multiple oocyte-specific genes, including those that initiate folliculogenesis and those that encode the zona pellucida (ZP1, ZP2 and ZP3) required for fertilization and early embryonic survival. Essential for oocytes to survive and form primordial follicles. The persistence of FIGLA in adult females suggests that it may regulate additional pathways that are essential for normal ovarian development. Binds to the E-box (5'-CANNTG-3') of the ZPs (ZP1, ZP2, ZP3) promoters. This is Factor in the germline alpha (FIGLA) from Homo sapiens (Human).